Here is a 129-residue protein sequence, read N- to C-terminus: Follitropin subunit beta (129 aa).

Positions 1-18 are cleaved as a signal peptide; the sequence is MKSVQFCFLFCCWRATCC. Disulfide bonds link Cys21-Cys69, Cys35-Cys84, Cys38-Cys122, Cys46-Cys100, Cys50-Cys102, and Cys105-Cys112. Residues Asn25 and Asn42 are each glycosylated (N-linked (GlcNAc...) asparagine).

The protein belongs to the glycoprotein hormones subunit beta family. In terms of assembly, heterodimer. The active follitropin is a heterodimer composed of an alpha chain/CGA shared with other hormones and a unique beta chain/FSHB shown here.

Its subcellular location is the secreted. Together with the alpha chain CGA constitutes follitropin, the follicle-stimulating hormone, and provides its biological specificity to the hormone heterodimer. Binds FSHR, a G protein-coupled receptor, on target cells to activate downstream signaling pathways. Follitropin is involved in follicle development and spermatogenesis in reproductive organs. This Cervus nippon (Sika deer) protein is Follitropin subunit beta (FSHB).